The following is a 60-amino-acid chain: Large ribosomal subunit protein bL32 (60 aa).

This sequence belongs to the bacterial ribosomal protein bL32 family.

This Thermosipho africanus (strain TCF52B) protein is Large ribosomal subunit protein bL32.